Here is a 619-residue protein sequence, read N- to C-terminus: 1-deoxy-D-xylulose-5-phosphate synthase (619 aa).

Thiamine diphosphate-binding positions include His-76 and 117 to 119 (AHS). A Mg(2+)-binding site is contributed by Asp-148. Thiamine diphosphate contacts are provided by residues 149 to 150 (GA), Asn-177, Tyr-284, and Glu-366. Asn-177 contributes to the Mg(2+) binding site.

It belongs to the transketolase family. DXPS subfamily. In terms of assembly, homodimer. It depends on Mg(2+) as a cofactor. Requires thiamine diphosphate as cofactor.

The catalysed reaction is D-glyceraldehyde 3-phosphate + pyruvate + H(+) = 1-deoxy-D-xylulose 5-phosphate + CO2. Its pathway is metabolic intermediate biosynthesis; 1-deoxy-D-xylulose 5-phosphate biosynthesis; 1-deoxy-D-xylulose 5-phosphate from D-glyceraldehyde 3-phosphate and pyruvate: step 1/1. Catalyzes the acyloin condensation reaction between C atoms 2 and 3 of pyruvate and glyceraldehyde 3-phosphate to yield 1-deoxy-D-xylulose-5-phosphate (DXP). The protein is 1-deoxy-D-xylulose-5-phosphate synthase of Azoarcus sp. (strain BH72).